The sequence spans 376 residues: Putative glutamate--cysteine ligase 2-3 (376 aa).

The protein belongs to the glutamate--cysteine ligase type 2 family. YbdK subfamily.

It carries out the reaction L-cysteine + L-glutamate + ATP = gamma-L-glutamyl-L-cysteine + ADP + phosphate + H(+). Functionally, ATP-dependent carboxylate-amine ligase which exhibits weak glutamate--cysteine ligase activity. This is Putative glutamate--cysteine ligase 2-3 from Nocardioides sp. (strain ATCC BAA-499 / JS614).